Consider the following 196-residue polypeptide: Putative 3-methyladenine DNA glycosylase (196 aa).

Belongs to the DNA glycosylase MPG family.

This Chlorobium luteolum (strain DSM 273 / BCRC 81028 / 2530) (Pelodictyon luteolum) protein is Putative 3-methyladenine DNA glycosylase.